Here is an 86-residue protein sequence, read N- to C-terminus: Small ribosomal subunit protein bS16 (86 aa).

It belongs to the bacterial ribosomal protein bS16 family.

This Stenotrophomonas maltophilia (strain K279a) protein is Small ribosomal subunit protein bS16.